The sequence spans 949 residues: MMWKMGPHFTTLLAMWLVCGSASHSPALDSDSHTGRKVPLVSPISSRSARYLRHTGRSGGVEKSTQEEPNPQPFQRRKSVPVLRLAHPTMRPPPSGINGVPVRPEVRPIARSSAREMVRDEGSSARTRMLRFPSGSSSPNILASFAGKNRVWVISAPHASEGYYRLMMSLLKDDVYCELAERHIQQIVLFHQAGEEGGKVRRITNEGQILEQPLDPNLIPKLMSFLKLEKGKFSMVLLKKTLQVEERYPYPVRLEAMYEVIDQGPIRRIEKIRQKGFVQKCKASGIEGHVVQEGNEGGGGAGGTGLGGDKRKEDPRRTQVHPTREAPRKQATSKAATPQPPPTPRATTLPPAPVTTATRATSRVVTIAARPTTTTAYPATQRPWTSRLHPFSVSHRPPATAEVTTARGPSVSEQLYPLPRKEQQREKPQATRRPSKATNYGSFTATPPPTLWEVSARVVGTSRFRDNRTDKREHGHQDPNAVPGPHKPVKGKLPKKKDRILSNEYEDKYDLSQPTSSQGEEERQVDSVPSQNAKESKKLEKLEKPEKEKKKKGKSAKQDKLLKSEKQAKKAEKKTKQEKDKNKKKKAGKTEQDDNQKPTAKHLAPSPKKSVADLLGSFEGKRRLLLITTPKAENNMYVQQRDEYLESFCKMATRRISVVTIFGPVNNSSMKIDHFQLDNEKPMRVVDDDDLVDQHLISELRKEYGMTYDDFFMVLTDVDLRVKQYYEVPIAMKSVFDLIDTFQSRIKDMEKQKKEGIACKEDKRQSLENFLSRFRWRRRLLVISAPNDEDWAYSQQLSALNGQACNFGLRHITILKLLGVGEEVGGVLELFPINGSSIVEREDVPAHLVKDIRNYFQVSPEYFSMLLVGKDGNVKSWYPSPMWSMVIVYDLIDSMQLRRQEMAIQQSLGMRCPEDEYAGYGYHSYHQGYQDGYQDDYRHHESYHHGYPY.

A signal peptide spans 1-22 (MMWKMGPHFTTLLAMWLVCGSA). Disordered stretches follow at residues 24-79 (HSPA…RRKS), 112-132 (SSAREMVRDEGSSARTRMLRF), and 289-610 (HVVQ…PKKS). Basic and acidic residues predominate over residues 112–123 (SSAREMVRDEGS). The segment covering 295–307 (NEGGGGAGGTGLG) has biased composition (gly residues). Positions 308 to 328 (GDKRKEDPRRTQVHPTREAPR) are enriched in basic and acidic residues. Residues 345–380 (RATTLPPAPVTTATRATSRVVTIAARPTTTTAYPAT) show a composition bias toward low complexity. Over residues 419–429 (PRKEQQREKPQ) the composition is skewed to basic and acidic residues. Residues 436–445 (KATNYGSFTA) show a composition bias toward polar residues. Positions 463–477 (RFRDNRTDKREHGHQ) are enriched in basic and acidic residues. Asn-467 carries N-linked (GlcNAc...) asparagine glycosylation. Over residues 487 to 498 (KPVKGKLPKKKD) the composition is skewed to basic residues. Composition is skewed to basic and acidic residues over residues 499 to 510 (RILSNEYEDKYD), 534 to 548 (KESKKLEKLEKPEKE), and 556 to 581 (AKQDKLLKSEKQAKKAEKKTKQEKDK). Residues Lys-544 and Lys-547 each participate in a glycyl lysine isopeptide (Lys-Gly) (interchain with G-Cter in SUMO2) cross-link. Residues 554 to 587 (KSAKQDKLLKSEKQAKKAEKKTKQEKDKNKKKKA) are a coiled coil.

This sequence belongs to the CCDC80 family. Binds to various extracellular matrix proteins. Phosphorylated. In terms of tissue distribution, expressed in brain, stomach, colon, rectum, liver, lung, kidney, adipocytes and testis.

It localises to the secreted. The protein resides in the extracellular space. Its subcellular location is the extracellular matrix. Functionally, promotes cell adhesion and matrix assembly. This Mus musculus (Mouse) protein is Coiled-coil domain-containing protein 80 (Ccdc80).